The following is a 356-amino-acid chain: MTEAKPVRVAVVYGGRSSEHSVSCISAGAIMEHLDPEKYEVVPIGITREGTWTQGNRAGLNIVDGRLPEVELHDELALSLNPATRGRIHNVTRHEHYTEVDVIVPVLHGPYGEDGTVQGLFELSGIPYVGAGVLASAVGMDKEFTKKLLVAEGLPVAPQEVLTGEATLDDLQKERLGLPVFVKPARGGSSIGVSKVSAWEDLEAALTLAYESDDKVLIEPEISGAEVEVGVLERPDGSLQASVPAKILGTTESEEGFYDFDAKYIDEGVSAAIPAPLSEELTAELRQRAIEAFRALGASGLSRVDFFVSDYSYCINEVNTFPGFTPISMYPQVFAAVGVGYAELLDTLIQTALARS.

An ATP-grasp domain is found at Lys146 to Gln350. Lys173–Glu228 contributes to the ATP binding site. Asp305, Glu317, and Asn319 together coordinate Mg(2+).

The protein belongs to the D-alanine--D-alanine ligase family. Mg(2+) serves as cofactor. Mn(2+) is required as a cofactor.

It is found in the cytoplasm. The catalysed reaction is 2 D-alanine + ATP = D-alanyl-D-alanine + ADP + phosphate + H(+). The protein operates within cell wall biogenesis; peptidoglycan biosynthesis. Cell wall formation. In Corynebacterium aurimucosum (strain ATCC 700975 / DSM 44827 / CIP 107346 / CN-1) (Corynebacterium nigricans), this protein is D-alanine--D-alanine ligase.